The primary structure comprises 544 residues: CTP synthase (544 aa).

The amidoligase domain stretch occupies residues 1–267; it reads MAKFVFVTGG…CRQVLDVLSL (267 aa). S13 is a binding site for CTP. S13 serves as a coordination point for UTP. Residues 14–19 and D71 each bind ATP; that span reads SIGKGI. Mg(2+) is bound by residues D71 and E141. CTP-binding positions include 148-150, 188-193, and K224; these read DIE and KTKPTQ. Residues 188–193 and K224 contribute to the UTP site; that span reads KTKPTQ. The region spanning 292 to 534 is the Glutamine amidotransferase type-1 domain; the sequence is KVALVGKYVQ…IQAASQRLPQ (243 aa). Position 354 (G354) interacts with L-glutamine. The Nucleophile; for glutamine hydrolysis role is filled by C381. L-glutamine contacts are provided by residues 382-385, E405, and R462; that span reads LGMQ. Catalysis depends on residues H507 and E509.

Belongs to the CTP synthase family. Homotetramer.

The catalysed reaction is UTP + L-glutamine + ATP + H2O = CTP + L-glutamate + ADP + phosphate + 2 H(+). It carries out the reaction L-glutamine + H2O = L-glutamate + NH4(+). The enzyme catalyses UTP + NH4(+) + ATP = CTP + ADP + phosphate + 2 H(+). Its pathway is pyrimidine metabolism; CTP biosynthesis via de novo pathway; CTP from UDP: step 2/2. With respect to regulation, allosterically activated by GTP, when glutamine is the substrate; GTP has no effect on the reaction when ammonia is the substrate. The allosteric effector GTP functions by stabilizing the protein conformation that binds the tetrahedral intermediate(s) formed during glutamine hydrolysis. Inhibited by the product CTP, via allosteric rather than competitive inhibition. In terms of biological role, catalyzes the ATP-dependent amination of UTP to CTP with either L-glutamine or ammonia as the source of nitrogen. Regulates intracellular CTP levels through interactions with the four ribonucleotide triphosphates. This chain is CTP synthase, found in Synechococcus sp. (strain RCC307).